Consider the following 89-residue polypeptide: Phosphocarrier protein HPr (89 aa).

The HPr domain maps to 1–88; sequence MLEHELIVTN…ELFENRFNED (88 aa). Histidine 15 (pros-phosphohistidine intermediate) is an active-site residue. Position 46 is a phosphoserine; by HPrK/P (serine 46).

Belongs to the HPr family.

It localises to the cytoplasm. Phosphorylation on Ser-46 inhibits the phosphoryl transfer from enzyme I to HPr. Functionally, general (non sugar-specific) component of the phosphoenolpyruvate-dependent sugar phosphotransferase system (sugar PTS). This major carbohydrate active-transport system catalyzes the phosphorylation of incoming sugar substrates concomitantly with their translocation across the cell membrane. The phosphoryl group from phosphoenolpyruvate (PEP) is transferred to the phosphoryl carrier protein HPr by enzyme I. Phospho-HPr then transfers it to the PTS EIIA domain. This chain is Phosphocarrier protein HPr (ptsH), found in Xylella fastidiosa (strain 9a5c).